Consider the following 489-residue polypeptide: N-succinylglutamate 5-semialdehyde dehydrogenase (489 aa).

223–228 (GSASTG) serves as a coordination point for NAD(+). Active-site residues include E246 and C280.

This sequence belongs to the aldehyde dehydrogenase family. AstD subfamily.

It catalyses the reaction N-succinyl-L-glutamate 5-semialdehyde + NAD(+) + H2O = N-succinyl-L-glutamate + NADH + 2 H(+). Its pathway is amino-acid degradation; L-arginine degradation via AST pathway; L-glutamate and succinate from L-arginine: step 4/5. Catalyzes the NAD-dependent reduction of succinylglutamate semialdehyde into succinylglutamate. This Acinetobacter baylyi (strain ATCC 33305 / BD413 / ADP1) protein is N-succinylglutamate 5-semialdehyde dehydrogenase.